A 343-amino-acid chain; its full sequence is Dipeptide transport system permease protein DppC (343 aa).

Transmembrane regions (helical) follow at residues 44 to 64 (LVAMWIIAITLVFSVISAFVV), 144 to 164 (LIIALAAALIDLVIGVTYGII), 195 to 215 (LALLLGQGISSIIIAIGLFAW), 259 to 279 (GVIVVQIMFDIPSMIMYEAVL), and 309 to 329 (FQLIIPAIVLSVLSLTFIFFG). One can recognise an ABC transmembrane type-1 domain in the interval 140–329 (LRISLIIALA…VLSLTFIFFG (190 aa)).

The protein belongs to the binding-protein-dependent transport system permease family. OppBC subfamily. In terms of assembly, the complex is composed of two ATP-binding proteins (DppD and DppF), two transmembrane proteins (DppB and DppC) and a solute-binding protein (DppA).

It is found in the cell membrane. Its function is as follows. Part of the ABC transporter DppABCDF involved in dipeptide transport. Responsible for the translocation of the substrate across the membrane. This Lactococcus lactis subsp. cremoris (strain MG1363) protein is Dipeptide transport system permease protein DppC.